A 679-amino-acid polypeptide reads, in one-letter code: MNNRAHTFLWGIRQFRTSIPRSRALRTYSLVFCKPEVIHSKRNPRNHLLNGFDEGLQPSVRYLFQDIFISKSVAGCTQTRGIIHAAGFKLDRILCPRRLSFDAKHSFVSDGTSDHDLMKTNFHHTSTEDVLTKKMRPTPVNYKKLAQECNSLSDVLDTFSKAPTFPGSNYFLAMWIIAKRISEDKRRFEKQLMFSHPAFNQLCEQMMREAKIMRYDHLLFSLNAIVKLGVPQNSLMVQTLLRTIQERISECDERCLSILSTALVTMEPCMNVNALRAGLRILVDQQVWNINDIFTLQTVMRCIGKDMKALKELGRFSVLNSRHMFEVLAAMDHRSVVLLNECSKIVIDNIHGCPFKVLISILQSCRDLRYQNEDLFKSIADYVATTFDIWKLKHVIFFLLSFETLGFRPPGLMDKLLEKVVQEPGSLTVKNIVSVLHVYSSLNHVHNVQNREFLEALASALTGCLHQISSESLLNAVHSFCMMNYFPLAPINQLIKENIIHELLTSGDTEKNIHKLHVLNTCLKLDESTYKCIHIPLPQLPLTASHPNEKLAEVLSRLLEGDGCFSRNVQLPHNYHIDFEIRMDTNRTQVFSFSEGDASSATNMQRVAVLCVPKSAYCLNSNHLRGLMAMKIRHLNVMGFHVILIHNWELKKLKMEDAVTFVRKKIYSDEALATTDESV.

Ser-113 and Ser-126 each carry phosphoserine. The region spanning 607 to 664 (VAVLCVPKSAYCLNSNHLRGLMAMKIRHLNVMGFHVILIHNWELKKLKMEDAVTFVRK) is the RAP domain.

The protein belongs to the FAST kinase family. As to quaternary structure, monomer. Found in a complex with GRSF1, DDX28, DHX30 and FASTKD5. Associates with the 16S mitochondrial rRNA (16S mt-rRNA). Forms a regulatory protein-RNA complex, consisting of RCC1L, NGRN, RPUSD3, RPUSD4, TRUB2, FASTKD2 and 16S mt-rRNA.

The protein resides in the mitochondrion matrix. Its subcellular location is the mitochondrion nucleoid. Functionally, plays an important role in assembly of the mitochondrial large ribosomal subunit. As a component of a functional protein-RNA module, consisting of RCC1L, NGRN, RPUSD3, RPUSD4, TRUB2, FASTKD2 and 16S mitochondrial ribosomal RNA (16S mt-rRNA), controls 16S mt-rRNA abundance and is required for intra-mitochondrial translation. May play a role in mitochondrial apoptosis. In Rattus norvegicus (Rat), this protein is FAST kinase domain-containing protein 2, mitochondrial (Fastkd2).